Reading from the N-terminus, the 336-residue chain is Aspartate--ammonia ligase (336 aa).

It belongs to the class-II aminoacyl-tRNA synthetase family. AsnA subfamily.

Its subcellular location is the cytoplasm. It carries out the reaction L-aspartate + NH4(+) + ATP = L-asparagine + AMP + diphosphate + H(+). Its pathway is amino-acid biosynthesis; L-asparagine biosynthesis; L-asparagine from L-aspartate (ammonia route): step 1/1. This Limosilactobacillus fermentum (strain NBRC 3956 / LMG 18251) (Lactobacillus fermentum) protein is Aspartate--ammonia ligase.